The following is a 403-amino-acid chain: Succinoglycan biosynthesis protein ExoL (403 aa).

The protein localises to the cytoplasm. It functions in the pathway glycan metabolism; exopolysaccharide biosynthesis. Functionally, essential for succinoglycan (EPS I) synthesis and nodule infection. Glycosyltransferase needed for the addition of the third sugar (glucose), catalyzes the formation of a beta-1,4 linkage between the second and third sugars. This Rhizobium meliloti (strain 1021) (Ensifer meliloti) protein is Succinoglycan biosynthesis protein ExoL (exoL).